Here is a 938-residue protein sequence, read N- to C-terminus: Isoleucine--tRNA ligase (938 aa).

Residues 58–68 (PYANGNIHIGH) carry the 'HIGH' region motif. Glu562 serves as a coordination point for L-isoleucyl-5'-AMP. Residues 603–607 (KMSKS) carry the 'KMSKS' region motif. Lys606 serves as a coordination point for ATP. Zn(2+) is bound by residues Cys901, Cys904, Cys921, and Cys924.

It belongs to the class-I aminoacyl-tRNA synthetase family. IleS type 1 subfamily. As to quaternary structure, monomer. It depends on Zn(2+) as a cofactor.

The protein resides in the cytoplasm. It catalyses the reaction tRNA(Ile) + L-isoleucine + ATP = L-isoleucyl-tRNA(Ile) + AMP + diphosphate. Catalyzes the attachment of isoleucine to tRNA(Ile). As IleRS can inadvertently accommodate and process structurally similar amino acids such as valine, to avoid such errors it has two additional distinct tRNA(Ile)-dependent editing activities. One activity is designated as 'pretransfer' editing and involves the hydrolysis of activated Val-AMP. The other activity is designated 'posttransfer' editing and involves deacylation of mischarged Val-tRNA(Ile). In Actinobacillus pleuropneumoniae serotype 7 (strain AP76), this protein is Isoleucine--tRNA ligase.